Consider the following 653-residue polypeptide: Choline transporter-like protein 3 (653 aa).

Residues 34-54 form a helical membrane-spanning segment; the sequence is WLFLFFLFWTGLVFIMGYSVV. N-linked (GlcNAc...) asparagine glycosylation is found at asparagine 136 and asparagine 151. Helical transmembrane passes span 213–233, 243–263, 284–304, 334–354, and 384–404; these read DTILGLCILALALSLAMMFTF, IFISLVILGLLFVCGVLWWLY, VLGFAIVSTGITAVLLVLIFV, LWTFAILIFFWVLWVAVLLSL, and LIGLIWTSEFILACQQMTIAG. Residues asparagine 412, asparagine 503, and asparagine 521 are each glycosylated (N-linked (GlcNAc...) asparagine). 2 helical membrane passes run 534–554 and 563–583; these read FIIFLGKVLVVCFTVFGGLMA and VWAVPLLLVAFFAYLVAHSFL. The tract at residues 632–653 is disordered; sequence RAQQDKHSLRNEEGTELQAIVR. The segment covering 634–644 has biased composition (basic and acidic residues); sequence QQDKHSLRNEE.

This sequence belongs to the CTL (choline transporter-like) family.

It localises to the membrane. In Homo sapiens (Human), this protein is Choline transporter-like protein 3 (SLC44A3).